The primary structure comprises 352 residues: C-C chemokine receptor type 5 (352 aa).

The Extracellular segment spans residues Met-1 to Ala-30. Sulfotyrosine is present on Tyr-3. Ser-6 and Ser-7 each carry an O-linked (GalNAc...) serine glycan. 3 positions are modified to sulfotyrosine: Tyr-10, Tyr-14, and Tyr-15. 2 cysteine pairs are disulfide-bonded: Cys-20–Cys-269 and Cys-101–Cys-178. A helical transmembrane segment spans residues Arg-31–Cys-58. At Lys-59 to Tyr-68 the chain is on the cytoplasmic side. A helical transmembrane segment spans residues Leu-69–Tyr-89. Topologically, residues Ala-90–Gln-102 are extracellular. The helical transmembrane segment at Leu-103–Ile-124 threads the bilayer. The Cytoplasmic segment spans residues Asp-125–Thr-141. The helical transmembrane segment at Val-142–Phe-166 threads the bilayer. Over Thr-167–Ile-198 the chain is Extracellular. The chain crosses the membrane as a helical span at residues Val-199–Leu-218. Residues Lys-219–Arg-235 lie on the Cytoplasmic side of the membrane. Residues Leu-236–Phe-260 traverse the membrane as a helical segment. Over Gln-261–Gln-277 the chain is Extracellular. A helical transmembrane segment spans residues Ala-278–Gly-301. At Glu-302 to Leu-352 the chain is on the cytoplasmic side. 3 S-palmitoyl cysteine lipidation sites follow: Cys-321, Cys-323, and Cys-324. Phosphoserine; by BARK1 occurs at positions 336, 337, 342, and 349.

This sequence belongs to the G-protein coupled receptor 1 family. As to quaternary structure, interacts with PRAF2. Efficient ligand binding to CCL3/MIP-1alpha and CCL4/MIP-1beta requires sulfation, O-glycosylation and sialic acid modifications. Glycosylation on Ser-6 is required for efficient binding of CCL4. Interacts with GRK2. Interacts with ARRB1 and ARRB2. Interacts with CNIH4. Interacts with S100A4; this interaction stimulates T-lymphocyte chemotaxis. In terms of processing, sulfated on at least 2 of the N-terminal tyrosines. Sulfation is required for efficient binding of the chemokines, CCL3 and CCL4. Palmitoylation in the C-terminal is important for cell surface expression. Post-translationally, phosphorylation on serine residues in the C-terminal is stimulated by binding CC chemokines especially by APO-RANTES. In terms of processing, O-glycosylated, but not N-glycosylated. Ser-6 appears to be the major site even if Ser-7 may be also O-glycosylated. Also sialylated glycans present which contribute to chemokine binding. Thr-16 and Ser-17 may also be glycosylated and, if so, with small moieties such as a T-antigen.

It is found in the cell membrane. Functionally, receptor for a number of inflammatory CC-chemokines including CCL3/MIP-1-alpha, CCL4/MIP-1-beta and RANTES and subsequently transduces a signal by increasing the intracellular calcium ion level. May play a role in the control of granulocytic lineage proliferation or differentiation. Participates in T-lymphocyte migration to the infection site by acting as a chemotactic receptor. This chain is C-C chemokine receptor type 5 (CCR5), found in Cercocebus atys (Sooty mangabey).